A 338-amino-acid polypeptide reads, in one-letter code: tRNA N6-adenosine threonylcarbamoyltransferase (338 aa).

Positions 111 and 115 each coordinate Fe cation. Residues 134 to 138 (LVSGG), aspartate 167, glycine 180, and asparagine 272 each bind substrate. Residue aspartate 300 coordinates Fe cation.

This sequence belongs to the KAE1 / TsaD family. The cofactor is Fe(2+).

The protein localises to the cytoplasm. It catalyses the reaction L-threonylcarbamoyladenylate + adenosine(37) in tRNA = N(6)-L-threonylcarbamoyladenosine(37) in tRNA + AMP + H(+). Required for the formation of a threonylcarbamoyl group on adenosine at position 37 (t(6)A37) in tRNAs that read codons beginning with adenine. Is involved in the transfer of the threonylcarbamoyl moiety of threonylcarbamoyl-AMP (TC-AMP) to the N6 group of A37, together with TsaE and TsaB. TsaD likely plays a direct catalytic role in this reaction. This is tRNA N6-adenosine threonylcarbamoyltransferase from Shewanella pealeana (strain ATCC 700345 / ANG-SQ1).